Consider the following 217-residue polypeptide: Ribonuclease T (217 aa).

In terms of domain architecture, Exonuclease spans 20-195 (VVVDVETAGF…YDTEKTAELF (176 aa)). The Mg(2+) site is built by aspartate 23, glutamate 25, histidine 182, and aspartate 187. The active-site Proton donor/acceptor is the histidine 182.

Belongs to the RNase T family. As to quaternary structure, homodimer. Mg(2+) serves as cofactor.

Its function is as follows. Trims short 3' overhangs of a variety of RNA species, leaving a one or two nucleotide 3' overhang. Responsible for the end-turnover of tRNA: specifically removes the terminal AMP residue from uncharged tRNA (tRNA-C-C-A). Also appears to be involved in tRNA biosynthesis. This chain is Ribonuclease T, found in Vibrio vulnificus (strain YJ016).